The chain runs to 329 residues: N-acetylmuramoyl-L-alanine amidase sle1 (329 aa).

The first 26 residues, 1–26 (MNKKILATAVLGTGALSTLFAHQAEA), serve as a signal peptide directing secretion. LysM domains are found at residues 28–71 (TTHT…VLKV), 88–131 (STYT…QLKV), and 152–195 (STYT…KLRV). In terms of domain architecture, Peptidase C51 spans 205 to 329 (STRSAQSTYY…YQVRNYKFIH (125 aa)).

The protein resides in the secreted. It is found in the cell surface. It catalyses the reaction Hydrolyzes the link between N-acetylmuramoyl residues and L-amino acid residues in certain cell-wall glycopeptides.. In terms of biological role, peptidoglycan hydrolase involved in the splitting of the septum during cell division. This is N-acetylmuramoyl-L-alanine amidase sle1 (sle1) from Staphylococcus haemolyticus (strain JCSC1435).